The primary structure comprises 158 residues: SsrA-binding protein (158 aa).

The disordered stretch occupies residues 131–158; the sequence is YDKRQTLRERQDKREADRAMSSHRRLGE.

The protein belongs to the SmpB family.

Its subcellular location is the cytoplasm. Its function is as follows. Required for rescue of stalled ribosomes mediated by trans-translation. Binds to transfer-messenger RNA (tmRNA), required for stable association of tmRNA with ribosomes. tmRNA and SmpB together mimic tRNA shape, replacing the anticodon stem-loop with SmpB. tmRNA is encoded by the ssrA gene; the 2 termini fold to resemble tRNA(Ala) and it encodes a 'tag peptide', a short internal open reading frame. During trans-translation Ala-aminoacylated tmRNA acts like a tRNA, entering the A-site of stalled ribosomes, displacing the stalled mRNA. The ribosome then switches to translate the ORF on the tmRNA; the nascent peptide is terminated with the 'tag peptide' encoded by the tmRNA and targeted for degradation. The ribosome is freed to recommence translation, which seems to be the essential function of trans-translation. The sequence is that of SsrA-binding protein from Clavibacter michiganensis subsp. michiganensis (strain NCPPB 382).